A 176-amino-acid chain; its full sequence is NAD(P)H-quinone oxidoreductase subunit 6, chloroplastic (176 aa).

5 helical membrane-spanning segments follow: residues 10-30 (FLLV…VLLT), 32-52 (PIFS…FFSL), 61-81 (AQLL…VMFM), 92-112 (LWTV…ISLI), and 152-172 (FFLP…GAIA).

The protein belongs to the complex I subunit 6 family. NDH is composed of at least 16 different subunits, 5 of which are encoded in the nucleus.

The protein localises to the plastid. The protein resides in the chloroplast thylakoid membrane. It catalyses the reaction a plastoquinone + NADH + (n+1) H(+)(in) = a plastoquinol + NAD(+) + n H(+)(out). The catalysed reaction is a plastoquinone + NADPH + (n+1) H(+)(in) = a plastoquinol + NADP(+) + n H(+)(out). Its function is as follows. NDH shuttles electrons from NAD(P)H:plastoquinone, via FMN and iron-sulfur (Fe-S) centers, to quinones in the photosynthetic chain and possibly in a chloroplast respiratory chain. The immediate electron acceptor for the enzyme in this species is believed to be plastoquinone. Couples the redox reaction to proton translocation, and thus conserves the redox energy in a proton gradient. The protein is NAD(P)H-quinone oxidoreductase subunit 6, chloroplastic (ndhG) of Oenothera argillicola (Appalachian evening primrose).